The primary structure comprises 168 residues: Sec-independent protein translocase protein TatB (168 aa).

The chain crosses the membrane as a helical span at residues 1–21 (MIDLGISKLALIGAVALIVIG).

The protein belongs to the TatB family. In terms of assembly, the Tat system comprises two distinct complexes: a TatABC complex, containing multiple copies of TatA, TatB and TatC subunits, and a separate TatA complex, containing only TatA subunits. Substrates initially bind to the TatABC complex, which probably triggers association of the separate TatA complex to form the active translocon.

The protein localises to the cell inner membrane. Part of the twin-arginine translocation (Tat) system that transports large folded proteins containing a characteristic twin-arginine motif in their signal peptide across membranes. Together with TatC, TatB is part of a receptor directly interacting with Tat signal peptides. TatB may form an oligomeric binding site that transiently accommodates folded Tat precursor proteins before their translocation. This chain is Sec-independent protein translocase protein TatB, found in Cupriavidus pinatubonensis (strain JMP 134 / LMG 1197) (Cupriavidus necator (strain JMP 134)).